We begin with the raw amino-acid sequence, 783 residues long: Polyadenylate-binding protein, cytoplasmic and nuclear (783 aa).

Residues 16-65 (DLGNTSLGGGDNRAAPAINTNVAPGEYQTADPDTAGPTPSSAAPHPQSSA) form a disordered region. Positions 54 to 65 (PSSAAPHPQSSA) are enriched in low complexity. RRM domains are found at residues 65 to 143 (ASLY…WSQR), 153 to 230 (GNVF…YHIP), 246 to 323 (TNIY…RAQK), and 349 to 471 (VNLY…LAQR). Disordered regions lie at residues 381-428 (MRDA…KGDR), 596-671 (AAAL…AAGG), and 752-783 (VKSQ…EEKA). The segment covering 396–406 (GKDKENKKEGE) has biased composition (basic and acidic residues). Residues 407–416 (QAAEAEGEAE) show a composition bias toward acidic residues. Residues 417 to 428 (GAEKKTEKKGDR) show a composition bias toward basic and acidic residues. Residues 601–614 (NGRGGPGGPGGRGM) are compositionally biased toward gly residues. Residues 630-641 (AGFPPNGRPQNG) show a composition bias toward low complexity. A compositionally biased stretch (gly residues) spans 642-655 (NMGGRGGPGRGGNF). The segment covering 656-671 (AAGRGAPPAGPLAAGG) has biased composition (low complexity). The 78-residue stretch at 676-753 (SSLLQSQLTA…AMAVYDEYVK (78 aa)) folds into the PABC domain. Basic and acidic residues predominate over residues 770–783 (EAEKPKEEKAEEKA).

It belongs to the polyadenylate-binding protein type-1 family.

Its subcellular location is the cytoplasm. The protein resides in the nucleus. Its function is as follows. Binds the poly(A) tail of mRNA. Appears to be an important mediator of the multiple roles of the poly(A) tail in mRNA biogenesis, stability and translation. In the nucleus, involved in both mRNA cleavage and polyadenylation. Is also required for efficient mRNA export to the cytoplasm. Acts in concert with a poly(A)-specific nuclease (PAN) to affect poly(A) tail shortening, which may occur concomitantly with either nucleocytoplasmic mRNA transport or translational initiation. In the cytoplasm, stimulates translation initiation and regulates mRNA decay through translation termination-coupled poly(A) shortening, probably mediated by PAN. This chain is Polyadenylate-binding protein, cytoplasmic and nuclear (PAB1), found in Chaetomium globosum (strain ATCC 6205 / CBS 148.51 / DSM 1962 / NBRC 6347 / NRRL 1970) (Soil fungus).